Here is a 595-residue protein sequence, read N- to C-terminus: Alpha-1,3-galactosidase B (595 aa).

Residues 1-22 form the signal peptide; it reads MKTILLFALSLLLSLSVSDVCA. 3 PbH1 repeats span residues 432 to 454, 455 to 477, and 488 to 541; these read TPEV…LFST, PKKT…LLCG, and CRDV…VIED.

Belongs to the glycosyl hydrolase 110 family. B subfamily.

It carries out the reaction Hydrolysis of terminal, non-reducing branched (1-&gt;3)-alpha-D-galactosidic residues, producing free D-galactose.. The enzyme catalyses Hydrolysis of terminal, non-reducing linear (1-&gt;3)-alpha-D-galactosidic residues, producing free D-galactose.. The catalysed reaction is Hydrolysis of terminal, non-reducing alpha-D-galactose residues in alpha-D-galactosides, including galactose oligosaccharides, galactomannans and galactolipids.. Functionally, alpha-galactosidase. Removes both branched alpha-1,3-linked galactose residues of blood group B antigens and linear alpha-1,3-linked galactose structures. The chain is Alpha-1,3-galactosidase B (glaB) from Bacteroides fragilis (strain YCH46).